We begin with the raw amino-acid sequence, 434 residues long: Trigger factor (434 aa).

The PPIase FKBP-type domain maps to 160-245 (DDKVKMNFIG…LTEVQAANLP (86 aa)).

Belongs to the FKBP-type PPIase family. Tig subfamily.

Its subcellular location is the cytoplasm. It catalyses the reaction [protein]-peptidylproline (omega=180) = [protein]-peptidylproline (omega=0). In terms of biological role, involved in protein export. Acts as a chaperone by maintaining the newly synthesized protein in an open conformation. Functions as a peptidyl-prolyl cis-trans isomerase. The chain is Trigger factor from Shewanella frigidimarina (strain NCIMB 400).